We begin with the raw amino-acid sequence, 881 residues long: MKAVVRVLKLEERAVHRQQNRPPAVQGSQHQSHSPACMNPALMSSPWVRQKHGGRAIPNRLCLSTTDSPHSYRYQDDDSPPPEHSFPRLTNEVRAPELVHVSEKNLSEIENVHGYVSHSHISPLKASPAPIIVNTDTLESVPYVNGTEIEYEFEEITLERGNSGLGFSIAGGTDNPHIGDDPGIFITKIIPGGAAAEDGRLRVNDCILRVNESDVSEVSHSKAVEALKAAGSIVRLYVRRRRPMLETVTEIKLIKGPKGLGFSIAGGVGNQHIPGDNSIYVTKIIDGGAAQKDGRLQVGDRLLMVNNYTLEEVTHEEAVAILKNTSDVVYLKVGKPTSVYLSDPYGPPDITHSFSPAMENHISSPGNNGTLEYKSSLPPISPGRYSPLPKHLLGEEDINRNPSLDEMEGHRFDSQHFQLREPRKIVLHKGSTGLGFNIVGGEDGEGIFVSFILAGGPADLSGELRRGDQILSVNGIDLRGATHEQAAAALKGAGQTVTIIAQYRPEEYGRFEAKIHDLREQMMNHSMSSGSGSLRTNQKRSLYVRALFDYERAKDSGLPSQGLSFRYGDILHVINASDDEWWQARRVTPEGDSEEMGVIPSKRRVERKERARLKTVKFNAKPGSLDSKGSFSEKRRKNFIFSRKFPFYKNKDADEQDGSDSERSQEELILSYEPVIRQEINYARPVIILGPMKDRINDDLISEFPDKFGSCVPPANSSDQEDTTRPKRDYEVDGRDYHFMASREQMEKDIQEHKFIEAGQYNDNLYGTSVQSVKYVAERGKHCILDVSGNAIKRLQVAQLYPIAIFIKPRSIESLMEMNKRLTEEQAKKTYDRAMKLEQEFGEYFTALVQGDTLEDIYNQCKMVIEEQSGPYIWIPSKEKL.

Disordered stretches follow at residues 16-41 and 63-88; these read HRQQ…MNPA and LSTT…SFPR. 3 consecutive PDZ domains span residues 155-242, 250-337, and 424-505; these read EITL…RRRR, EIKL…GKPT, and KIVL…QYRP. The 71-residue stretch at 539-609 folds into the SH3 domain; that stretch reads KRSLYVRALF…PSKRRVERKE (71 aa). Positions 683–866 constitute a Guanylate kinase-like domain; sequence ARPVIILGPM…IYNQCKMVIE (184 aa). Positions 709–729 are disordered; sequence GSCVPPANSSDQEDTTRPKRD.

Belongs to the MAGUK family.

The protein resides in the cell membrane. Its subcellular location is the postsynaptic density. The protein localises to the synapse. It is found in the membrane. It localises to the cell projection. The protein resides in the axon. Its subcellular location is the perikaryon. In terms of biological role, may play a role in synapse assembly and function. The polypeptide is Disks large homolog 2 (dlg2) (Danio rerio (Zebrafish)).